A 661-amino-acid polypeptide reads, in one-letter code: UvrABC system protein B (661 aa).

The region spanning 24-209 (NGLNKGYRFQ…IFPSYQDEGI (186 aa)) is the Helicase ATP-binding domain. An ATP-binding site is contributed by 37 to 44 (GVTGSGKT). Residues 90-113 (YYDYYQPEAYVPTKDLYIEKSADI) carry the Beta-hairpin motif. In terms of domain architecture, Helicase C-terminal spans 430–594 (DLVNEIVQVK…IIKPLMEDIF (165 aa)). Positions 622–657 (EEYAALLEEEMYKAASELRYEDAARLRDELFKIKEE) constitute a UVR domain.

The protein belongs to the UvrB family. As to quaternary structure, forms a heterotetramer with UvrA during the search for lesions. Interacts with UvrC in an incision complex.

It localises to the cytoplasm. Its function is as follows. The UvrABC repair system catalyzes the recognition and processing of DNA lesions. A damage recognition complex composed of 2 UvrA and 2 UvrB subunits scans DNA for abnormalities. Upon binding of the UvrA(2)B(2) complex to a putative damaged site, the DNA wraps around one UvrB monomer. DNA wrap is dependent on ATP binding by UvrB and probably causes local melting of the DNA helix, facilitating insertion of UvrB beta-hairpin between the DNA strands. Then UvrB probes one DNA strand for the presence of a lesion. If a lesion is found the UvrA subunits dissociate and the UvrB-DNA preincision complex is formed. This complex is subsequently bound by UvrC and the second UvrB is released. If no lesion is found, the DNA wraps around the other UvrB subunit that will check the other stand for damage. The sequence is that of UvrABC system protein B from Fervidobacterium nodosum (strain ATCC 35602 / DSM 5306 / Rt17-B1).